The sequence spans 968 residues: RNA polymerase-associated protein RapA (968 aa).

Residues glutamate 163–aspartate 332 form the Helicase ATP-binding domain. Aspartate 176–threonine 183 is an ATP binding site. Positions aspartate 278–histidine 281 match the DEAH box motif. The Helicase C-terminal domain maps to arginine 491 to asparagine 645.

Belongs to the SNF2/RAD54 helicase family. RapA subfamily. In terms of assembly, interacts with the RNAP. Has a higher affinity for the core RNAP than for the holoenzyme. Its ATPase activity is stimulated by binding to RNAP.

Functionally, transcription regulator that activates transcription by stimulating RNA polymerase (RNAP) recycling in case of stress conditions such as supercoiled DNA or high salt concentrations. Probably acts by releasing the RNAP, when it is trapped or immobilized on tightly supercoiled DNA. Does not activate transcription on linear DNA. Probably not involved in DNA repair. This Shewanella woodyi (strain ATCC 51908 / MS32) protein is RNA polymerase-associated protein RapA.